The sequence spans 801 residues: Elongation factor G, mitochondrial (801 aa).

The transit peptide at 1 to 62 directs the protein to the mitochondrion; that stretch reads MRTPTLARLP…LSKHFQQRRN (62 aa). Residues 99–386 form the tr-type G domain; sequence SRVRNIGIAA…GVIDYLPNPS (288 aa). GTP-binding positions include 108 to 115, 184 to 188, and 238 to 241; these read AHIDSGKT, DTPGH, and NKMD.

The protein belongs to the TRAFAC class translation factor GTPase superfamily. Classic translation factor GTPase family. EF-G/EF-2 subfamily.

The protein resides in the mitochondrion. Its pathway is protein biosynthesis; polypeptide chain elongation. Its function is as follows. Mitochondrial GTPase that catalyzes the GTP-dependent ribosomal translocation step during translation elongation. During this step, the ribosome changes from the pre-translocational (PRE) to the post-translocational (POST) state as the newly formed A-site-bound peptidyl-tRNA and P-site-bound deacylated tRNA move to the P and E sites, respectively. Catalyzes the coordinated movement of the two tRNA molecules, the mRNA and conformational changes in the ribosome. The polypeptide is Elongation factor G, mitochondrial (mef1) (Aspergillus niger (strain ATCC MYA-4892 / CBS 513.88 / FGSC A1513)).